We begin with the raw amino-acid sequence, 255 residues long: Alpha-acetolactate decarboxylase (255 aa).

Belongs to the alpha-acetolactate decarboxylase family.

The catalysed reaction is (2S)-2-acetolactate + H(+) = (R)-acetoin + CO2. The protein operates within polyol metabolism; (R,R)-butane-2,3-diol biosynthesis; (R,R)-butane-2,3-diol from pyruvate: step 2/3. Its function is as follows. Converts acetolactate into acetoin, which can be excreted by the cells. This may be a mechanism for controlling the internal pH of cells in the stationary stage. The protein is Alpha-acetolactate decarboxylase (alsD) of Bacillus subtilis (strain 168).